The following is a 420-amino-acid chain: Glutamate-1-semialdehyde 2,1-aminomutase (420 aa).

N6-(pyridoxal phosphate)lysine is present on lysine 259.

This sequence belongs to the class-III pyridoxal-phosphate-dependent aminotransferase family. HemL subfamily. As to quaternary structure, homodimer. Requires pyridoxal 5'-phosphate as cofactor.

The protein resides in the cytoplasm. It carries out the reaction (S)-4-amino-5-oxopentanoate = 5-aminolevulinate. Its pathway is porphyrin-containing compound metabolism; protoporphyrin-IX biosynthesis; 5-aminolevulinate from L-glutamyl-tRNA(Glu): step 2/2. This Nautilia profundicola (strain ATCC BAA-1463 / DSM 18972 / AmH) protein is Glutamate-1-semialdehyde 2,1-aminomutase.